The primary structure comprises 347 residues: MARSINLAVIPGDGIGQEVVAQGLKVLSAALPSDVKLETKEFDFGARRYHATGETLTDADLDALKQHDAILLGAIGDPSVPSGVLERGFLLKLRFAFDHHVNLRPSKLLPGVETPLAGQPEIDFVVVREGTEGPYTGNGGTIRTGTPHAVATEVSLNTAFGIERVVRDAYARAQARPRKKLALVHKNNVLVHAGHLWTDIFNKVGEEFPDVTTEYMHVDAATIYLVTQPERFDVIVTDNLFGDIITDLAAAISGGIGVAASGNINPSGAYPSMFEPVHGSAPDIAGQGKADPSATILSVALLLRHLGYEAEAARIEEAVSADLAERVGKPARSTDEIGDALTVRVAG.

Positions 94, 104, 128, and 219 each coordinate substrate. Residues D219, D243, and D247 each contribute to the Mg(2+) site. 279–291 contacts NAD(+); the sequence is GSAPDIAGQGKAD.

This sequence belongs to the isocitrate and isopropylmalate dehydrogenases family. LeuB type 2 subfamily. As to quaternary structure, homodimer. It depends on Mg(2+) as a cofactor. The cofactor is Mn(2+).

It localises to the cytoplasm. It carries out the reaction (2R,3S)-3-isopropylmalate + NAD(+) = 4-methyl-2-oxopentanoate + CO2 + NADH. Its pathway is amino-acid biosynthesis; L-leucine biosynthesis; L-leucine from 3-methyl-2-oxobutanoate: step 3/4. Catalyzes the oxidation of 3-carboxy-2-hydroxy-4-methylpentanoate (3-isopropylmalate) to 3-carboxy-4-methyl-2-oxopentanoate. The product decarboxylates to 4-methyl-2 oxopentanoate. The polypeptide is 3-isopropylmalate dehydrogenase (Streptomyces avermitilis (strain ATCC 31267 / DSM 46492 / JCM 5070 / NBRC 14893 / NCIMB 12804 / NRRL 8165 / MA-4680)).